Here is a 203-residue protein sequence, read N- to C-terminus: Holliday junction branch migration complex subunit RuvA (203 aa).

Residues 1 to 64 (MIGRLRGIII…EDAQLLYGFN (64 aa)) are domain I. Residues 65–142 (NKQERTLFKE…KGLHGDLFTP (78 aa)) are domain II. Residues 143 to 154 (AADLVLTSPASP) are flexible linker. The tract at residues 155–203 (ATDDAEQEAVAALVALGYKPQEASRMVSKIARPDTSSETLIREALRAAL) is domain III.

Belongs to the RuvA family. Homotetramer. Forms an RuvA(8)-RuvB(12)-Holliday junction (HJ) complex. HJ DNA is sandwiched between 2 RuvA tetramers; dsDNA enters through RuvA and exits via RuvB. An RuvB hexamer assembles on each DNA strand where it exits the tetramer. Each RuvB hexamer is contacted by two RuvA subunits (via domain III) on 2 adjacent RuvB subunits; this complex drives branch migration. In the full resolvosome a probable DNA-RuvA(4)-RuvB(12)-RuvC(2) complex forms which resolves the HJ.

It is found in the cytoplasm. In terms of biological role, the RuvA-RuvB-RuvC complex processes Holliday junction (HJ) DNA during genetic recombination and DNA repair, while the RuvA-RuvB complex plays an important role in the rescue of blocked DNA replication forks via replication fork reversal (RFR). RuvA specifically binds to HJ cruciform DNA, conferring on it an open structure. The RuvB hexamer acts as an ATP-dependent pump, pulling dsDNA into and through the RuvAB complex. HJ branch migration allows RuvC to scan DNA until it finds its consensus sequence, where it cleaves and resolves the cruciform DNA. The chain is Holliday junction branch migration complex subunit RuvA from Shigella flexneri serotype 5b (strain 8401).